A 672-amino-acid chain; its full sequence is MPDHARMPRNLSSNKIAKTIAGEDLDEEEVLEMDAGQSAREEGRFVFECAWEVANKVGGIYTVLRSKAQISTEELGDQYCMFGPMKDGKWRLEVDPIEPENRTIRAAMKRFQADGFRCMYGRWLIEGYPKVILFDLGSGAVKMNEWKHELFEQCKIGIPHEDIESNDAVILGFMVALFLKHFRESVTSYTPLVVAHFHEWQAGVGLLMTRLWKLDIATVYTTHATLLGRHLCAGGADLYNNLDSFDLDAEAGKRKIYHQYCLERAACQTAHIFTTVSEITGLEAEHFLCRKPDVLTPNGLNVVKFAALHEFQNLHAQNKEKINQFIRGHFHGHLDFDLDKTLYFFTAGRYEFSNKGGDMFIESLARLNHYLKTTSDPRHMGVTVVAFLIYPAPANSFNVESLKGQAVTKQLKEAVDRIKEKVGQRIFDICLQGHLPEPEELMSPADNILLKRCIMSLHNSSLPPICTHNMIRADDPVLESLRRTSLFNKPEDRVKVVFHPEFLSSVSPLIGLDYEDFVRGCHLGVFPSYYEPWGYTPAECTVMGIPSVSTNLSGFGCFMQEHVEDHEQKGIYVIDRRHKAAEESVQELAQVMYDFCGQSRRQRIILRNSNEGLSALLDWQNLGVFYRDCRRLALERLHPDVDKIMRDNEGKVPSAATSRRPSIHSSDGEDDE.

A UDP-alpha-D-glucose-binding site is contributed by lysine 56. Positions 645 to 672 are disordered; the sequence is MRDNEGKVPSAATSRRPSIHSSDGEDDE. Polar residues predominate over residues 655-665; it reads AATSRRPSIHS.

The protein belongs to the glycosyltransferase 3 family. In terms of assembly, forms a hetero-octamer with each protomer of the gsy-1 homotetramer bound to one molecule of gyg-1. The N-terminus is involved in interprotomer contacts with gyg-1. The interaction with gyg-1 is required for glycogen production but is not required for gsy-1 intrinsic activity.

The enzyme catalyses [(1-&gt;4)-alpha-D-glucosyl](n) + UDP-alpha-D-glucose = [(1-&gt;4)-alpha-D-glucosyl](n+1) + UDP + H(+). Its pathway is glycan biosynthesis; glycogen biosynthesis. Its function is as follows. Transfers the glycosyl residue from UDP-Glc to the non-reducing end of alpha-1,4-glucan. The sequence is that of Glycogen [starch] synthase from Caenorhabditis elegans.